Consider the following 115-residue polypeptide: T-cell receptor gamma chain V region V108B (115 aa).

Positions 1–18 (MLLLRWPTFCCLWVFGLG) are cleaved as a signal peptide. The v segment stretch occupies residues 19-115 (QLEQTELSVT…EATYYCAVWI (97 aa)).

This Mus musculus (Mouse) protein is T-cell receptor gamma chain V region V108B (Tcrg-V1).